Consider the following 218-residue polypeptide: 7-cyano-7-deazaguanine synthase (218 aa).

9-19 (YSGGMDSFTVL) contacts ATP. Zn(2+) is bound by residues cysteine 185, cysteine 193, cysteine 196, and cysteine 199.

This sequence belongs to the QueC family. Requires Zn(2+) as cofactor.

The enzyme catalyses 7-carboxy-7-deazaguanine + NH4(+) + ATP = 7-cyano-7-deazaguanine + ADP + phosphate + H2O + H(+). Its pathway is purine metabolism; 7-cyano-7-deazaguanine biosynthesis. Its function is as follows. Catalyzes the ATP-dependent conversion of 7-carboxy-7-deazaguanine (CDG) to 7-cyano-7-deazaguanine (preQ(0)). In Alteromonas mediterranea (strain DSM 17117 / CIP 110805 / LMG 28347 / Deep ecotype), this protein is 7-cyano-7-deazaguanine synthase.